The sequence spans 486 residues: Cardiolipin synthase A (486 aa).

The next 2 helical transmembrane spans lie at 3–23 and 38–58; these read TFYT…IAGV and MAWL…YLSV. 2 PLD phosphodiesterase domains span residues 219–246 and 399–426; these read MDLR…VDPR and EGGL…DMRS. Catalysis depends on residues His-224, Lys-226, Asp-231, His-404, Lys-406, and Asp-411.

This sequence belongs to the phospholipase D family. Cardiolipin synthase subfamily. ClsA sub-subfamily.

The protein localises to the cell inner membrane. It carries out the reaction 2 a 1,2-diacyl-sn-glycero-3-phospho-(1'-sn-glycerol) = a cardiolipin + glycerol. Functionally, catalyzes the reversible phosphatidyl group transfer from one phosphatidylglycerol molecule to another to form cardiolipin (CL) (diphosphatidylglycerol) and glycerol. In Cronobacter sakazakii (strain ATCC BAA-894) (Enterobacter sakazakii), this protein is Cardiolipin synthase A.